Here is a 240-residue protein sequence, read N- to C-terminus: Bidirectional sugar transporter SWEET5 (240 aa).

Over 1–9 (MTDPHTART) the chain is Extracellular. The helical transmembrane segment at 10–30 (IVGIVGNVISFGLFCAPIPTM) threads the bilayer. The MtN3/slv 1 domain maps to 10–95 (IVGIVGNVIS…YVTIFFVFAT (86 aa)). Residues 31–45 (VKIWKMKSVSEFKPD) are Cytoplasmic-facing. Residues 46 to 66 (PYVATVLNCMMWTFYGLPFVQ) form a helical membrane-spanning segment. The Extracellular portion of the chain corresponds to 67-72 (PDSLLV). A helical transmembrane segment spans residues 73 to 93 (ITINGTGLFMELVYVTIFFVF). Residues 94–103 (ATSPVRRKIT) are Cytoplasmic-facing. A helical transmembrane segment spans residues 104 to 124 (IAMVIEVIFMAVVIFCTMYFL). Residues 125-131 (HTTKQRS) are Extracellular-facing. A helical membrane pass occupies residues 132-152 (MLIGILCIVFNVIMYAAPLTV). The region spanning 133-217 (LIGILCIVFN…IIYITYYKTT (85 aa)) is the MtN3/slv 2 domain. Residues 153–165 (MKLVIKTKSVKYM) lie on the Cytoplasmic side of the membrane. Residues 166–186 (PFFLSLANFMNGVVWVIYACL) form a helical membrane-spanning segment. Residues 187–190 (KFDP) lie on the Extracellular side of the membrane. The helical transmembrane segment at 191-211 (YILIPNGLGSLSGIIQLIIYI) threads the bilayer. Residues 212–240 (TYYKTTNWNDDDEDKEKRYSNAGIELGQA) are Cytoplasmic-facing.

This sequence belongs to the SWEET sugar transporter family. As to quaternary structure, forms homooligomers and heterooligomers with SWEET6, SWEET8, SWEET9, SWEET11 and SWEET12.

The protein resides in the cell membrane. Mediates both low-affinity uptake and efflux of sugar across the plasma membrane. May play roles in nurturing the male gametophyte. This Arabidopsis thaliana (Mouse-ear cress) protein is Bidirectional sugar transporter SWEET5.